The primary structure comprises 21 residues: Glucan endo-1,3-beta-glucosidase 2 (21 aa).

The interval 1-21 (APGDLLWSDEFDGAAGSAPNP) is disordered.

The catalysed reaction is Hydrolysis of (1-&gt;3)-beta-D-glucosidic linkages in (1-&gt;3)-beta-D-glucans.. In Papiliotrema laurentii (Cryptococcus laurentii), this protein is Glucan endo-1,3-beta-glucosidase 2.